Consider the following 275-residue polypeptide: Uroplakin-3b (275 aa).

An N-terminal signal peptide occupies residues 1 to 26 (MVRTRWQPPLRALLLLVLVWLPQSLS). Residues 27-196 (LDLIAYVPQI…DTWPGRRSGC (170 aa)) lie on the Lumenal side of the membrane. N-linked (GlcNAc...) asparagine glycosylation occurs at Asn-77. The helical transmembrane segment at 197-217 (MIVITSILSALAGLLLLAFLA) threads the bilayer. Over 218 to 275 (ASTTRFSSLWWPEEAPEQLRIGSFMGKRYMTHHIPPSEAATLPVGCEPGLDPLPSLSP) the chain is Cytoplasmic.

This sequence belongs to the uroplakin-3 family. In terms of assembly, heterodimer with uroplakin-1B (UPK1B). In terms of tissue distribution, expression is urothelium-specific.

It localises to the cell membrane. Its function is as follows. Component of the asymmetric unit membrane (AUM); a highly specialized biomembrane elaborated by terminally differentiated urothelial cells. May play an important role in AUM-cytoskeleton interaction in terminally differentiated urothelial cells. It also contributes to the formation of urothelial glycocalyx which may play an important role in preventing bacterial adherence. In Mus musculus (Mouse), this protein is Uroplakin-3b (Upk3b).